A 101-amino-acid polypeptide reads, in one-letter code: Large ribosomal subunit protein uL23 (101 aa).

Belongs to the universal ribosomal protein uL23 family. As to quaternary structure, part of the 50S ribosomal subunit. Contacts protein L29, and trigger factor when it is bound to the ribosome.

Its function is as follows. One of the early assembly proteins it binds 23S rRNA. One of the proteins that surrounds the polypeptide exit tunnel on the outside of the ribosome. Forms the main docking site for trigger factor binding to the ribosome. In Histophilus somni (strain 129Pt) (Haemophilus somnus), this protein is Large ribosomal subunit protein uL23.